Consider the following 89-residue polypeptide: Putative RING finger protein 121R (89 aa).

The segment at 45–78 adopts an RING-type zinc-finger fold; the sequence is CPICLIAKVNTVLECTHVLCSNCVKKINVCPICR.

The protein is Putative RING finger protein 121R of Invertebrate iridescent virus 6 (IIV-6).